The chain runs to 369 residues: Peptide chain release factor 2 (369 aa).

N5-methylglutamine is present on glutamine 251.

This sequence belongs to the prokaryotic/mitochondrial release factor family. In terms of processing, methylated by PrmC. Methylation increases the termination efficiency of RF2.

The protein resides in the cytoplasm. Peptide chain release factor 2 directs the termination of translation in response to the peptide chain termination codons UGA and UAA. This Thermotoga maritima (strain ATCC 43589 / DSM 3109 / JCM 10099 / NBRC 100826 / MSB8) protein is Peptide chain release factor 2 (prfB).